A 302-amino-acid chain; its full sequence is Lipoyl synthase (302 aa).

Residues Cys44, Cys49, Cys55, Cys70, Cys74, Cys77, and Ser283 each coordinate [4Fe-4S] cluster. In terms of domain architecture, Radical SAM core spans 56–272; the sequence is WSKKHATVMI…AKVARSKGFL (217 aa).

The protein belongs to the radical SAM superfamily. Lipoyl synthase family. Requires [4Fe-4S] cluster as cofactor.

It is found in the cytoplasm. The catalysed reaction is [[Fe-S] cluster scaffold protein carrying a second [4Fe-4S](2+) cluster] + N(6)-octanoyl-L-lysyl-[protein] + 2 oxidized [2Fe-2S]-[ferredoxin] + 2 S-adenosyl-L-methionine + 4 H(+) = [[Fe-S] cluster scaffold protein] + N(6)-[(R)-dihydrolipoyl]-L-lysyl-[protein] + 4 Fe(3+) + 2 hydrogen sulfide + 2 5'-deoxyadenosine + 2 L-methionine + 2 reduced [2Fe-2S]-[ferredoxin]. Its pathway is protein modification; protein lipoylation via endogenous pathway; protein N(6)-(lipoyl)lysine from octanoyl-[acyl-carrier-protein]: step 2/2. Catalyzes the radical-mediated insertion of two sulfur atoms into the C-6 and C-8 positions of the octanoyl moiety bound to the lipoyl domains of lipoate-dependent enzymes, thereby converting the octanoylated domains into lipoylated derivatives. This is Lipoyl synthase from Orientia tsutsugamushi (strain Boryong) (Rickettsia tsutsugamushi).